We begin with the raw amino-acid sequence, 503 residues long: MEFPLYTTTLLCGVISSTLLLLLLNKLTTWEHIVPSKVPWIDRRSEPFGYLRAKCRSFFNMKENITEAYYAFNKEGRAAALAIAFGRPQIILPPKYIRWIIDQPESVLSIDPIHNEFHAFVRDGLVGDHLVQEVLRRELAGHLAHLTREMNEEIADSVESVLGVSKEWATVPLRDSMRIIIARISNRLFVGKELCRNEDYIRNAVGLGMAVMPQTLVQDLLPQLLKGPLSFATKLFTRITLAGLSGHLSPVVRQRIQDVQTAEKDQLPLELLTWMAQRALQRGESATSIEEKLIARIAMANLASIETTTNTITKCMEDMTALSNETGGYLELMRQEAHTVLEACNYSPIKADLEKLVHIENALKESLRLAVVFPGLIRQVTSRTGVTLDDGTHLPHGARISVAAYAIHRDDANWTDAARYDPSRHEKASLPMSRGSEQLLSFGLGKRACPGRFFVTDELKLLFAHILTKYEFKVIKPPVTKVGLLKELTMRGPQEQLVIRRVK.

The helical transmembrane segment at 8–24 (TTLLCGVISSTLLLLLL) threads the bilayer. Residues N64, N324, and N413 are each glycosylated (N-linked (GlcNAc...) asparagine). Position 449 (C449) interacts with heme.

The protein belongs to the cytochrome P450 family. The cofactor is heme.

The protein resides in the membrane. It participates in antifungal biosynthesis. Its function is as follows. Cytochrome P450 monooxygenase; part of the gene cluster that mediates the biosynthesis of echinocandin B, a fungal lipidated cyclic hexapeptide that acts as an antifungal agent. Linoleoyl-AMP, produced by the fatty-acyl-AMP ligase ecdI, is transferred to the initiation carrier domain (T0) of ecdA. The linoleoyl-S-phosphopantetheinyl-T0 is sequentially extended with L-ornithine, L-threonine, L-proline, L-homotyrosine, L-threonine, and 4R-methyl-L-proline to form the linear hexapeptide. Thereafter, the terminal condensation (C7) performs macrocyclization of the NRPS product and the cyclic scaffold is released from ecdA. All six of the amino acid residues are hydroxylated, including 4R,5R-dihydroxy-L-ornithine, 4R-hydroxyl-L-proline, 3S,4S-dihydroxy-L-homotyrosine, and 3S-hydroxyl-4S-methyl-L-prolin. In the pathway, all the hydroxylation reactions are proposed to occur following completion of the cyclic peptide, so the unhydroxylated precursor produced by ecdA will undergo six rounds of hydroxylation. Five hydroxylase genes (ecdG, ecdH, ecdK, htyE and htyF) are embedded within the echinocandin B (ecd) and L-homotyrosine (hty) clusters. The polypeptide is Cytochrome P450 monooxygenase ecdH (Aspergillus rugulosus (Emericella rugulosa)).